The primary structure comprises 194 residues: Large ribosomal subunit protein bL17 (194 aa).

The interval 126–194 (AEPKQTKART…SPEQTNKQEE (69 aa)) is disordered. Basic residues predominate over residues 131–140 (TKARTRRGKG). Composition is skewed to polar residues over residues 144–161 (ATTTVSSEKTQPNTQDMA) and 181–194 (LDTQSPEQTNKQEE).

Belongs to the bacterial ribosomal protein bL17 family. As to quaternary structure, part of the 50S ribosomal subunit. Contacts protein L32.

This chain is Large ribosomal subunit protein bL17, found in Amoebophilus asiaticus (strain 5a2).